Consider the following 391-residue polypeptide: Aminoacetone oxidase (391 aa).

Residues Ala14, Glu33, Ile134, Glu362, Asn374, and Ile375 each coordinate FAD.

It belongs to the BaiN/RdsA family. As to quaternary structure, monomer. Requires FAD as cofactor.

In terms of biological role, flavoprotein that probably catalyzes the condensation of two molecules of aminoacetone to yield 3,6-dimethyl-2,5-dihydropyrazine, which is subsequently oxidized to 2,5-dimethylpyrazine. It could be involved in a microbial defense mechanism related to aminoacetone catabolism through a pathway yielding dimethylpyrazine derivatives instead of methylglyoxal. It has also low aminoacetone oxidase activity, and can produce hydrogen peroxide from aminoacetone. In addition, it shows very low L-amino acid oxidase activity, and can produce hydrogen peroxide from peptone and from seven amino acids, L-aspartate, L-tryptophan, L-lysine, L-isoleucine, L-arginine, L-asparagine and L-glutamine. It cannot use L-malate, oxaloacetate or alpha-aminobutyrate. Plays a role in antioxidant defense. This is Aminoacetone oxidase from Streptococcus cristatus.